The following is a 244-amino-acid chain: Small ribosomal subunit protein eS4 (244 aa).

An S4 RNA-binding domain is found at 43-108 (LPLLLIVRDI…NYRVLFDRKG (66 aa)).

This sequence belongs to the eukaryotic ribosomal protein eS4 family.

This chain is Small ribosomal subunit protein eS4 (rps4e), found in Methanocaldococcus jannaschii (strain ATCC 43067 / DSM 2661 / JAL-1 / JCM 10045 / NBRC 100440) (Methanococcus jannaschii).